Reading from the N-terminus, the 97-residue chain is MKLTSHDIIRKPVITEKSMAAMAENKYTFIVHMAANKVQIKRAVEEVFNVKVADVKTMRFEGKTKRVGVHIGKRADFKKAVITLAEGSSIEFFEGMQ.

The protein belongs to the universal ribosomal protein uL23 family. In terms of assembly, part of the 50S ribosomal subunit. Contacts protein L29, and trigger factor when it is bound to the ribosome.

Functionally, one of the early assembly proteins it binds 23S rRNA. One of the proteins that surrounds the polypeptide exit tunnel on the outside of the ribosome. Forms the main docking site for trigger factor binding to the ribosome. This Clostridium perfringens (strain SM101 / Type A) protein is Large ribosomal subunit protein uL23.